Reading from the N-terminus, the 387-residue chain is MTVLKMTDLDLQGKRVLIREDLNVPVKDGVVSSDARILASLPTIRLALEKGAAVMVCSHLGRPTEGEFSAENSLKPVADYLSKALGRDVPLVADYLDGVDVKAGDVVLFENVRFNKGEKKNADELAQKYAALCDVFVMDAFGTAHRAEGSTHGVAKFAKVAAAGPLLAAELEALGKALGAPAQPMTAIVAGSKVSTKLDVLNSLSGICNQLIVGGGIANTFLAAAGHKVGKSLYEPDLLDTARAIAAKVSVPLPTDVVVAKEFAESATATVKLIADVADDDMILDIGPQTAAHFAELLKSSGTILWNGPVGVFEFDQFGEGTKTLAKAIGESQAFSIAGGGDTLAAIDKYGVAEQISYISTGGGAFLEFVEGKVLPAVEVLEQRAKA.

Substrate is bound by residues 21–23, arginine 36, 59–62, arginine 113, and arginine 146; these read DLN and HLGR. ATP contacts are provided by residues lysine 197, glutamate 314, and 340–343; that span reads GGDT.

This sequence belongs to the phosphoglycerate kinase family. Monomer.

It localises to the cytoplasm. It carries out the reaction (2R)-3-phosphoglycerate + ATP = (2R)-3-phospho-glyceroyl phosphate + ADP. It participates in carbohydrate degradation; glycolysis; pyruvate from D-glyceraldehyde 3-phosphate: step 2/5. The chain is Phosphoglycerate kinase from Pseudomonas savastanoi pv. phaseolicola (strain 1448A / Race 6) (Pseudomonas syringae pv. phaseolicola (strain 1448A / Race 6)).